Here is a 466-residue protein sequence, read N- to C-terminus: Glutamate--tRNA ligase 2 (466 aa).

Residues 9-19 (PSPTGSLHLGG) carry the 'HIGH' region motif. Positions 236–240 (KLSKR) match the 'KMSKS' region motif. An ATP-binding site is contributed by Lys239.

The protein belongs to the class-I aminoacyl-tRNA synthetase family. Glutamate--tRNA ligase type 1 subfamily. As to quaternary structure, monomer.

The protein resides in the cytoplasm. It catalyses the reaction tRNA(Glu) + L-glutamate + ATP = L-glutamyl-tRNA(Glu) + AMP + diphosphate. Its function is as follows. Catalyzes the attachment of glutamate to tRNA(Glu) in a two-step reaction: glutamate is first activated by ATP to form Glu-AMP and then transferred to the acceptor end of tRNA(Glu). This chain is Glutamate--tRNA ligase 2, found in Anaplasma marginale (strain St. Maries).